The following is a 461-amino-acid chain: Lysosomal proton-coupled steroid conjugate and bile acid symporter SLC46A3 (461 aa).

Positions 1–25 (MKILFVEPAIFLSAFAMTLTGPLTT) are cleaved as a signal peptide. Residues 26–73 (QYVYRRIWEETGNYTFSSDSNISECEKNKSSPIFAFQEEVQKKVSRFN) lie on the Extracellular side of the membrane. N-linked (GlcNAc...) asparagine glycans are attached at residues Asn38, Asn46, and Asn53. Residues 74-94 (LQMDISGLIPGLVSTFILLSI) traverse the membrane as a helical segment. The Cytoplasmic segment spans residues 95–101 (SDHYGRK). A helical transmembrane segment spans residues 102–124 (FPMILSSVGALATSVWLCLLCYF). Residues 125–133 (AFPFQLLIA) lie on the Extracellular side of the membrane. Residues 134–156 (STFIGAFCGNYTTFWGACFAYIV) form a helical membrane-spanning segment. The Cytoplasmic segment spans residues 157–170 (DQCKEHKQKTIRIA). Residues 171 to 191 (IIDFLLGLVTGLTGLSSGYFI) traverse the membrane as a helical segment. The Extracellular portion of the chain corresponds to 192–197 (RELGFE). A helical transmembrane segment spans residues 198–218 (WSFLIIAVSLAVNLIYILFFL). At 219–261 (GDPVKECSSQNVTMSCSEGFKNLFYRTYMLFKNASGKRRFLLC) the chain is on the cytoplasmic side. A helical membrane pass occupies residues 262–282 (LLLFTVITYFFVVIGIAPIFI). At 283–294 (LYELDSPLCWNE) the chain is on the extracellular side. The chain crosses the membrane as a helical span at residues 295-315 (VFIGYGSALGSASFLTSFLGI). Residues 316-324 (WLFSYCMED) are Cytoplasmic-facing. The helical transmembrane segment at 325 to 345 (IHMAFIGIFTTMTGMAMTAFA) threads the bilayer. The Extracellular portion of the chain corresponds to 346 to 347 (ST). Residues 348-368 (TLMMFLARVPFLFTIVPFSVL) form a helical membrane-spanning segment. The Cytoplasmic portion of the chain corresponds to 369-382 (RSMLSKVVRSTEQG). The helical transmembrane segment at 383 to 403 (TLFACIAFLETLGGVTAVSTF) threads the bilayer. Topologically, residues 404 to 415 (NGIYSATVAWYP) are extracellular. The chain crosses the membrane as a helical span at residues 416–436 (GFTFLLSAGLLLLPAISLCVV). Residues 437-461 (KCTSWNEGSYELLIQEESSEDASDR) lie on the Cytoplasmic side of the membrane. A Tyrosine-based lysosomal-sorting motif motif is present at residues 446 to 449 (YELL).

Belongs to the major facilitator superfamily. SLC46A family.

It is found in the lysosome membrane. The enzyme catalyses estrone 3-sulfate(out) + n H(+)(out) = estrone 3-sulfate(in) + n H(+)(in). It catalyses the reaction 25-hydroxyvitamin D3 sulfate(out) + n H(+)(out) = 25-hydroxyvitamin D3 sulfate(in) + n H(+)(in). The catalysed reaction is cholate(out) + n H(+)(out) = cholate(in) + n H(+)(in). It carries out the reaction glycocholate(out) + n H(+)(out) = glycocholate(in) + n H(+)(in). The enzyme catalyses taurocholate(out) + n H(+)(out) = taurocholate(in) + n H(+)(in). It catalyses the reaction dehydroepiandrosterone 3-sulfate(out) + n H(+)(out) = dehydroepiandrosterone 3-sulfate(in) + n H(+)(in). The catalysed reaction is N-acetyl-D-muramoyl-L-alanyl-D-isoglutamine(out) + n H(+)(out) = N-acetyl-D-muramoyl-L-alanyl-D-isoglutamine(in) + n H(+)(in). It carries out the reaction 2',3'-cGAMP(out) + n H(+)(out) = 2',3'-cGAMP(in) + n H(+)(in). Functionally, lysosomal proton-coupled steroid conjugate and bile acid transporter. Preferentially recognizes lipophilic steroid conjugates or bile acis as endogenous substrates and seems to mediate escape from lysosomes to the cytoplasm. Modulates hepatic cytosolic copper homeostasis, maybe acting as a lysosomal copper transporter and sequestering copper ions in the lysosome. Transports catabolites of non-cleavable antibody-drug conjugates from the lysosome to the cytoplasm. Delivers pathogen-associated molecular patterns to cytosolic pattern recognition receptors as part of the innate immune response to microbes. Selectively transports bacterial muramyl dipeptide (MDP) into the cytosol for recognition by NOD2, triggering inflammatory responses. Likely acts as a redundant importer of cyclic GMP-AMP dinucleotides (cGAMPs) in monocyte and macrophage cell lineages. The transport mechanism, its electrogenicity and stoichiometry remain to be elucidated. This chain is Lysosomal proton-coupled steroid conjugate and bile acid symporter SLC46A3, found in Homo sapiens (Human).